A 91-amino-acid chain; its full sequence is ATP-dependent Clp protease adapter protein ClpS (91 aa).

It belongs to the ClpS family. As to quaternary structure, binds to the N-terminal domain of the chaperone ClpA.

Its function is as follows. Involved in the modulation of the specificity of the ClpAP-mediated ATP-dependent protein degradation. In Synechococcus sp. (strain ATCC 27144 / PCC 6301 / SAUG 1402/1) (Anacystis nidulans), this protein is ATP-dependent Clp protease adapter protein ClpS.